A 444-amino-acid polypeptide reads, in one-letter code: Exodeoxyribonuclease 7 large subunit (444 aa).

This sequence belongs to the XseA family. Heterooligomer composed of large and small subunits.

The protein resides in the cytoplasm. The catalysed reaction is Exonucleolytic cleavage in either 5'- to 3'- or 3'- to 5'-direction to yield nucleoside 5'-phosphates.. In terms of biological role, bidirectionally degrades single-stranded DNA into large acid-insoluble oligonucleotides, which are then degraded further into small acid-soluble oligonucleotides. The protein is Exodeoxyribonuclease 7 large subunit of Pseudoalteromonas atlantica (strain T6c / ATCC BAA-1087).